Here is a 117-residue protein sequence, read N- to C-terminus: MTRVKRGNVARKRRKKILKLAKGFRGSHSRLFRTANQQVMKALRNAYRDRRKRKRDFRRLWITRINAAARANGMSYSQLIGHMKKANIEINRKMLAQLAILDPQAFAKVVETASAAK.

Belongs to the bacterial ribosomal protein bL20 family.

Its function is as follows. Binds directly to 23S ribosomal RNA and is necessary for the in vitro assembly process of the 50S ribosomal subunit. It is not involved in the protein synthesizing functions of that subunit. In Crocosphaera subtropica (strain ATCC 51142 / BH68) (Cyanothece sp. (strain ATCC 51142)), this protein is Large ribosomal subunit protein bL20.